Reading from the N-terminus, the 666-residue chain is DNA mismatch repair protein MutL (666 aa).

It belongs to the DNA mismatch repair MutL/HexB family.

Functionally, this protein is involved in the repair of mismatches in DNA. It is required for dam-dependent methyl-directed DNA mismatch repair. May act as a 'molecular matchmaker', a protein that promotes the formation of a stable complex between two or more DNA-binding proteins in an ATP-dependent manner without itself being part of a final effector complex. In Clostridium botulinum (strain 657 / Type Ba4), this protein is DNA mismatch repair protein MutL.